Here is a 96-residue protein sequence, read N- to C-terminus: Cell division protein FtsB (96 aa).

Topologically, residues 1–11 (MDIKSNSFFYI) are cytoplasmic. The helical transmembrane segment at 12–29 (FISVVLLLIAILQYDLWF) threads the bilayer. The Periplasmic segment spans residues 30-96 (SNTGFIKYQA…KQGEVFYSVK (67 aa)).

The protein belongs to the FtsB family. In terms of assembly, part of a complex composed of FtsB, FtsL and FtsQ.

Its subcellular location is the cell inner membrane. Functionally, essential cell division protein. May link together the upstream cell division proteins, which are predominantly cytoplasmic, with the downstream cell division proteins, which are predominantly periplasmic. In Francisella tularensis subsp. tularensis (strain SCHU S4 / Schu 4), this protein is Cell division protein FtsB.